Reading from the N-terminus, the 616-residue chain is Chaperone protein HscA homolog (616 aa).

It belongs to the heat shock protein 70 family.

In terms of biological role, probable chaperone. Has a low intrinsic ATPase activity which is markedly stimulated by HscB. The sequence is that of Chaperone protein HscA homolog from Vibrio cholerae serotype O1 (strain ATCC 39315 / El Tor Inaba N16961).